A 477-amino-acid chain; its full sequence is Glutamyl-tRNA reductase (477 aa).

Residues 49 to 52, Ser109, 114 to 116, and Gln120 each bind substrate; these read TCNR and EGQ. Cys50 serves as the catalytic Nucleophile. 221-226 contributes to the NADP(+) binding site; it reads GAGSMS.

The protein belongs to the glutamyl-tRNA reductase family. In terms of assembly, homodimer.

The catalysed reaction is (S)-4-amino-5-oxopentanoate + tRNA(Glu) + NADP(+) = L-glutamyl-tRNA(Glu) + NADPH + H(+). Its pathway is porphyrin-containing compound metabolism; protoporphyrin-IX biosynthesis; 5-aminolevulinate from L-glutamyl-tRNA(Glu): step 1/2. Functionally, catalyzes the NADPH-dependent reduction of glutamyl-tRNA(Glu) to glutamate 1-semialdehyde (GSA). In Thermobifida fusca (strain YX), this protein is Glutamyl-tRNA reductase.